Consider the following 279-residue polypeptide: Undecaprenyl-diphosphatase (279 aa).

7 helical membrane-spanning segments follow: residues 10–30 (FICF…FLPI), 48–68 (LGVS…IYYF), 96–116 (LFLY…LIKL), 128–148 (GLFS…LSEI), 203–223 (SFLV…FSLF), 229–249 (IDII…IFAI), and 259–279 (NNTL…LTTL).

The protein belongs to the UppP family.

It localises to the cell inner membrane. It catalyses the reaction di-trans,octa-cis-undecaprenyl diphosphate + H2O = di-trans,octa-cis-undecaprenyl phosphate + phosphate + H(+). Its function is as follows. Catalyzes the dephosphorylation of undecaprenyl diphosphate (UPP). Confers resistance to bacitracin. The chain is Undecaprenyl-diphosphatase from Prochlorococcus marinus (strain NATL2A).